Consider the following 229-residue polypeptide: ATP synthase subunit a 3 (229 aa).

6 consecutive transmembrane segments (helical) span residues 25–45 (ADAV…SFLA), 86–106 (VATI…PGFF), 111–131 (NINT…VVGI), 142–162 (FCGP…IGHL), 181–201 (LVLI…MMLM), and 202–222 (GVLV…IYIQ).

This sequence belongs to the ATPase A chain family. In terms of assembly, F-type ATPases have 2 components, CF(1) - the catalytic core - and CF(0) - the membrane proton channel. CF(1) has five subunits: alpha(3), beta(3), gamma(1), delta(1), epsilon(1). CF(0) has three main subunits: a(1), b(2) and c(9-12). The alpha and beta chains form an alternating ring which encloses part of the gamma chain. CF(1) is attached to CF(0) by a central stalk formed by the gamma and epsilon chains, while a peripheral stalk is formed by the delta and b chains.

The protein resides in the cell inner membrane. In terms of biological role, key component of the proton channel; it plays a direct role in the translocation of protons across the membrane. The protein is ATP synthase subunit a 3 of Pelobacter propionicus (strain DSM 2379 / NBRC 103807 / OttBd1).